The sequence spans 414 residues: Tryptophan synthase beta chain (414 aa).

The tract at residues 1–26 (MVSTFSRKNQNYKKDDLNQPSKDGRF) is disordered. Residues 12-26 (YKKDDLNQPSKDGRF) are compositionally biased toward basic and acidic residues. Lys-109 bears the N6-(pyridoxal phosphate)lysine mark.

Belongs to the TrpB family. Tetramer of two alpha and two beta chains. Pyridoxal 5'-phosphate is required as a cofactor.

The catalysed reaction is (1S,2R)-1-C-(indol-3-yl)glycerol 3-phosphate + L-serine = D-glyceraldehyde 3-phosphate + L-tryptophan + H2O. It participates in amino-acid biosynthesis; L-tryptophan biosynthesis; L-tryptophan from chorismate: step 5/5. In terms of biological role, the beta subunit is responsible for the synthesis of L-tryptophan from indole and L-serine. This chain is Tryptophan synthase beta chain, found in Prochlorococcus marinus (strain MIT 9215).